Here is a 62-residue protein sequence, read N- to C-terminus: Small ribosomal subunit protein eS27 (62 aa).

Positions 17, 20, 36, and 39 each coordinate Zn(2+). Residues 17–39 form a C4-type zinc finger; sequence CPDCENEQTIFDRACTPVDCIVC.

It belongs to the eukaryotic ribosomal protein eS27 family. As to quaternary structure, part of the 30S ribosomal subunit. The cofactor is Zn(2+).

This chain is Small ribosomal subunit protein eS27, found in Methanospirillum hungatei JF-1 (strain ATCC 27890 / DSM 864 / NBRC 100397 / JF-1).